The chain runs to 865 residues: Xylosyltransferase 2 (865 aa).

Residues 1 to 15 lie on the Cytoplasmic side of the membrane; that stretch reads MVASARVQKLVRRYK. Residues 16 to 36 form a helical; Signal-anchor for type II membrane protein membrane-spanning segment; that stretch reads LAIATALAILLLQGLVVWSFS. Over 37 to 865 the chain is Lumenal; that stretch reads GLEEDEAGEK…GPVKADGRLR (829 aa). The disordered stretch occupies residues 41–157; it reads DEAGEKGRQR…EGAPQPTDNG (117 aa). Residues 53–65 are compositionally biased toward basic and acidic residues; that stretch reads RPLDPGEGSKDTD. The span at 73–82 shows a compositional bias: basic residues; it reads STGRRHGRWR. An N-linked (GlcNAc...) asparagine glycan is attached at Asn122. Positions 125–137 are enriched in low complexity; the sequence is GAAAGEALVGAAG. 4 disulfide bridges follow: Cys162–Cys190, Cys206–Cys448, Cys467–Cys480, and Cys469–Cys478. UDP-alpha-D-xylose is bound by residues Val239, Asp267, and 296 to 298; that span reads TIW. Asn327 carries N-linked (GlcNAc...) asparagine glycosylation. 400-401 is a UDP-alpha-D-xylose binding site; it reads DW. Residues Ser481 and 504–505 contribute to the UDP-alpha-D-xylose site; that span reads RK. Disulfide bonds link Cys581/Cys833 and Cys826/Cys839. An N-linked (GlcNAc...) asparagine glycan is attached at Asn683. The interval 846-865 is disordered; that stretch reads SLSPDPKSELGPVKADGRLR.

This sequence belongs to the glycosyltransferase 14 family. XylT subfamily. In terms of assembly, monomer. Requires Mg(2+) as cofactor. It depends on Mn(2+) as a cofactor. Contains disulfide bonds. Widely expressed. Expressed at higher level in kidney and pancreas.

The protein localises to the golgi apparatus membrane. The protein resides in the secreted. The enzyme catalyses UDP-alpha-D-xylose + L-seryl-[protein] = 3-O-(beta-D-xylosyl)-L-seryl-[protein] + UDP + H(+). The protein operates within glycan metabolism; chondroitin sulfate biosynthesis. Its pathway is glycan metabolism; heparan sulfate biosynthesis. Catalyzes the first step in the biosynthesis of chondroitin sulfate, heparan sulfate and dermatan sulfate proteoglycans, such as DCN. Transfers D-xylose from UDP-D-xylose to specific serine residues of the core protein. In Homo sapiens (Human), this protein is Xylosyltransferase 2 (XYLT2).